A 356-amino-acid chain; its full sequence is DNA integrity scanning protein DisA (356 aa).

One can recognise a DAC domain in the interval 7–147; that stretch reads NKNMLYALKM…EKYVVEDISK (141 aa). ATP is bound by residues Gly-74, Leu-92, and 105–109; that span reads TRHRT.

The protein belongs to the DisA family. Homooctamer. Mg(2+) serves as cofactor.

The catalysed reaction is 2 ATP = 3',3'-c-di-AMP + 2 diphosphate. Functionally, participates in a DNA-damage check-point that is active prior to asymmetric division when DNA is damaged. DisA forms globular foci that rapidly scan along the chromosomes during sporulation, searching for lesions. When a lesion is present, DisA pauses at the lesion site. This triggers a cellular response that culminates in a temporary block in sporulation initiation. Its function is as follows. Also has diadenylate cyclase activity, catalyzing the condensation of 2 ATP molecules into cyclic di-AMP (c-di-AMP). c-di-AMP acts as a signaling molecule that couples DNA integrity with progression of sporulation. The rise in c-di-AMP level generated by DisA while scanning the chromosome, operates as a positive signal that advances sporulation; upon encountering a lesion, the DisA focus arrests at the damaged site and halts c-di-AMP synthesis. This chain is DNA integrity scanning protein DisA, found in Clostridioides difficile (strain 630) (Peptoclostridium difficile).